We begin with the raw amino-acid sequence, 244 residues long: HTH-type transcriptional regulator Cmr (244 aa).

Gly41–Arg160 provides a ligand contact to a nucleoside 3',5'-cyclic phosphate. The region spanning Arg174–His237 is the HTH crp-type domain. Residues Gln197 to Lys216 constitute a DNA-binding region (H-T-H motif).

Positively regulates the expression of at least groEL2. The polypeptide is HTH-type transcriptional regulator Cmr (cmr) (Mycobacterium tuberculosis (strain CDC 1551 / Oshkosh)).